The sequence spans 462 residues: UDP-N-acetylmuramate--L-alanine ligase (462 aa).

117–123 (GTHGKTT) lines the ATP pocket.

This sequence belongs to the MurCDEF family.

The protein resides in the cytoplasm. It catalyses the reaction UDP-N-acetyl-alpha-D-muramate + L-alanine + ATP = UDP-N-acetyl-alpha-D-muramoyl-L-alanine + ADP + phosphate + H(+). It functions in the pathway cell wall biogenesis; peptidoglycan biosynthesis. Functionally, cell wall formation. This is UDP-N-acetylmuramate--L-alanine ligase from Streptomyces coelicolor (strain ATCC BAA-471 / A3(2) / M145).